A 67-amino-acid chain; its full sequence is MRLVVCLVFLASFALVCQGHSSGYTRPLPKPSRPIFIRPIGCDVCYGIPSSTARLCCFRYGDCCHRG.

Positions 1-19 are cleaved as a signal peptide; sequence MRLVVCLVFLASFALVCQG. 3 disulfides stabilise this stretch: Cys42–Cys56, Cys45–Cys63, and Cys57–Cys64. Arginine amide is present on Arg66.

It belongs to the penaeidin family.

It localises to the cytoplasmic granule. Its function is as follows. Antibacterial and antifungal activity. Presents chitin-binding activity. In Penaeus vannamei (Whiteleg shrimp), this protein is Penaeidin-4a.